A 37-amino-acid chain; its full sequence is Cytochrome b6-f complex subunit 7 (37 aa).

A helical membrane pass occupies residues 11–29; that stretch reads AVLLMVLVLVGLAWGFLLL.

It belongs to the PetM family. In terms of assembly, the 4 large subunits of the cytochrome b6-f complex are cytochrome b6, subunit IV (17 kDa polypeptide, PetD), cytochrome f and the Rieske protein, while the 4 small subunits are PetG, PetL, PetM and PetN. The complex functions as a dimer.

It is found in the cellular thylakoid membrane. Component of the cytochrome b6-f complex, which mediates electron transfer between photosystem II (PSII) and photosystem I (PSI), cyclic electron flow around PSI, and state transitions. In Rippkaea orientalis (strain PCC 8801 / RF-1) (Cyanothece sp. (strain PCC 8801)), this protein is Cytochrome b6-f complex subunit 7.